Consider the following 121-residue polypeptide: Small ribosomal subunit protein bS6 (121 aa).

Belongs to the bacterial ribosomal protein bS6 family.

Its function is as follows. Binds together with bS18 to 16S ribosomal RNA. This Rickettsia peacockii (strain Rustic) protein is Small ribosomal subunit protein bS6.